Consider the following 349-residue polypeptide: Inositol 2-dehydrogenase (349 aa).

This sequence belongs to the Gfo/Idh/MocA family. In terms of assembly, homotetramer.

It catalyses the reaction myo-inositol + NAD(+) = scyllo-inosose + NADH + H(+). In terms of biological role, involved in the oxidation of myo-inositol (MI) to 2-keto-myo-inositol (2KMI or 2-inosose). This is Inositol 2-dehydrogenase from Mycolicibacterium gilvum (strain PYR-GCK) (Mycobacterium gilvum (strain PYR-GCK)).